The sequence spans 158 residues: Transcriptional regulator MraZ (158 aa).

2 SpoVT-AbrB domains span residues 5–50 and 91–134; these read IYET…GGVY and AVEC…SQSE.

Belongs to the MraZ family. Forms oligomers.

It is found in the cytoplasm. The protein resides in the nucleoid. This chain is Transcriptional regulator MraZ, found in Geobacter metallireducens (strain ATCC 53774 / DSM 7210 / GS-15).